We begin with the raw amino-acid sequence, 153 residues long: UPF0260 protein Plav_0898 (153 aa).

Belongs to the UPF0260 family.

The sequence is that of UPF0260 protein Plav_0898 from Parvibaculum lavamentivorans (strain DS-1 / DSM 13023 / NCIMB 13966).